The following is a 745-amino-acid chain: Cullin-2 (745 aa).

An N6-acetyllysine modification is found at K393. T661 is subject to Phosphothreonine. Positions 675–735 constitute a Cullin neddylation domain; it reads DRKMYLQAAI…IDKQYIERSQ (61 aa). Residue K689 forms a Glycyl lysine isopeptide (Lys-Gly) (interchain with G-Cter in NEDD8) linkage.

It belongs to the cullin family. Component of multiple Cul2-RING (CRL2) E3 ubiquitin-protein ligase complexes consisting of CUL2, Elongin BC (ELOB and ELOC), RBX1 and a variable substrate-specific adapter; this complex is also known as ECS (Elongin BC-CUL2/5-SOCS-box protein) complex and may consist of CUL2 or CUL5. Component of the ECS(VHL) or CBC(VHL) complex containing CUL2, RBX1, ELOB, ELOC and VHL. Component of the ECS(MED8) complex with the probable substrate recognition component MED8. Component of multiple ECS complexes part of the DesCEND (destruction via C-end degrons) pathway, which contain either KLHDC2, KLHDC3, KLHDC10, APPBP2, FEM1A, FEM1B or FEM1C as substrate-recognition component. Component of the ECS(LRR1) complex with the substrate recognition component LRR1. Component of a CRL2(FEM1B) complex containing CUL2, RBX1, ELOB, ELOC and FEM1B. Component of a CRL2(FEM1C) complex containing CUL2, RBX1, ELOB, ELOC and FEM1C. Part of an E3 ubiquitin-protein ligase complex including ZYG11B, CUL2 and Elongin BC. Part of an E3 ubiquitin-protein ligase complex including ZER1, CUL2 and Elongin BC. Interacts with RBX1, RNF7, FEM1B and TIP120A/CAND1. Found in a complex composed of LIMD1, VHL, EGLN1/PHD2, ELOB and CUL2. Interacts (when neddylated) with ARIH1; leading to activate the E3 ligase activity of ARIH1. Interacts (unneddylated form) with DCUN1D1, DCUN1D2, DCUN1D3, DCUN1D4 and DCUN1D5; these interactions promote the cullin neddylation. Component of VCB (elongins BC/CUL2/VHL) complex that contains at least DCUN1D1, CUL2 and VHL; this complex triggers CUL2 neddylation and consequently cullin ring ligase (CRL) substrates polyubiquitylation. Neddylated; which enhances the ubiquitination activity of ECS (Elongin BC-CUL2/5-SOCS-box protein) E3 ubiquitin-protein ligase complexes. Neddylation leads to structural rearrangment in the complex that allows interaction between the E2 ubiquitin-conjugating enzyme and the acceptor ubiquitin. CBC(VHL) complex formation seems to promote neddylation. Deneddylated via its interaction with the COP9 signalosome (CSN) complex.

The protein localises to the nucleus. It participates in protein modification; protein ubiquitination. Core component of multiple cullin-RING-based ECS (ElonginB/C-CUL2/5-SOCS-box protein) E3 ubiquitin-protein ligase complexes, which mediate the ubiquitination of target proteins. CUL2 may serve as a rigid scaffold in the complex and may contribute to catalysis through positioning of the substrate and the ubiquitin-conjugating enzyme. The E3 ubiquitin-protein ligase activity of the complex is dependent on the neddylation of the cullin subunit and is inhibited by the association of the deneddylated cullin subunit with TIP120A/CAND1. The functional specificity of the ECS complex depends on the substrate recognition component. ECS(VHL) mediates the ubiquitination of hypoxia-inducible factor (HIF). A number of ECS complexes (containing either KLHDC2, KLHDC3, KLHDC10, APPBP2, FEM1A, FEM1B or FEM1C as substrate-recognition component) are part of the DesCEND (destruction via C-end degrons) pathway, which recognizes a C-degron located at the extreme C terminus of target proteins, leading to their ubiquitination and degradation. ECS complexes and ARIH1 collaborate in tandem to mediate ubiquitination of target proteins. ECS(LRR1) ubiquitinates MCM7 and promotes CMG replisome disassembly by VCP and chromatin extraction during S-phase. This Pongo abelii (Sumatran orangutan) protein is Cullin-2 (CUL2).